The chain runs to 249 residues: Aquaporin TIP4-1 (249 aa).

An N-acetylmethionine modification is found at Met-1. The Cytoplasmic segment spans residues 1–20; that stretch reads MKKIELGHHSEAAKPDCIKA. Lys-3 carries the N6,N6-dimethyllysine modification. A helical transmembrane segment spans residues 21–41; the sequence is LIVEFITTFLFVFAGVGSAMA. Residues 42-49 are Vacuolar-facing; it reads TDSLVGNT. A helical membrane pass occupies residues 50-70; that stretch reads LVGLFAVAVAHAFVVAVMISA. At 71-105 the chain is on the cytoplasmic side; it reads GHISGGHLNPAVTLGLLLGGHISVFRAFLYWIDQL. Positions 79–81 match the NPA 1 motif; it reads NPA. Residues 106-126 form a helical membrane-spanning segment; sequence LASSAACFLLSYLTGGMGTPV. The Vacuolar segment spans residues 127–137; the sequence is HTLASGVSYTQ. Residues 138–158 traverse the membrane as a helical segment; that stretch reads GIIWEIILTFSLLFTVYATIV. At 159-166 the chain is on the cytoplasmic side; it reads DPKKGSLD. Residues 167 to 187 form a helical membrane-spanning segment; the sequence is GFGPLLTGFVVGANILAGGAF. The Vacuolar segment spans residues 188-212; it reads SGASMNPARSFGPALVSGNWTDHWV. The NPA 2 motif lies at 193 to 195; it reads NPA. The helical transmembrane segment at 213–233 threads the bilayer; sequence YWVGPLIGGGLAGFIYENVLI. Residues 234-249 lie on the Cytoplasmic side of the membrane; it reads DRPHVPVADDEQPLLN.

Belongs to the MIP/aquaporin (TC 1.A.8) family. TIP (TC 1.A.8.10) subfamily. As to expression, expressed in roots.

The protein resides in the vacuole membrane. Aquaporins facilitate the transport of water and small neutral solutes across cell membranes. Transports urea in yeast cells in a pH-independent manner. This Arabidopsis thaliana (Mouse-ear cress) protein is Aquaporin TIP4-1 (TIP4-1).